We begin with the raw amino-acid sequence, 508 residues long: Flavonoid 3',5'-hydroxylase 2 (508 aa).

Cys-443 is a binding site for heme.

This sequence belongs to the cytochrome P450 family. Heme serves as cofactor. Flowers.

Its subcellular location is the microsome. The protein localises to the endoplasmic reticulum. It carries out the reaction a 3',5'-unsubstituted flavanone + 2 reduced [NADPH--hemoprotein reductase] + 2 O2 = a 3',5'-dihydroxyflavanone + 2 oxidized [NADPH--hemoprotein reductase] + 2 H2O + 2 H(+). Its pathway is pigment biosynthesis; anthocyanin biosynthesis. Catalyzes the 3'5'-hydroxylation of naringenin and eriodictyol to form 5,7,3,'4',5'-pentahydroxyflavanone and 3',5'-hydroxylation of dihydrokaempferol and dihydroquercetin to form dihydromyricetin. The protein is Flavonoid 3',5'-hydroxylase 2 (CYP75A3) of Petunia hybrida (Petunia).